Consider the following 174-residue polypeptide: Putative FAS1 domain-containing protein 096L (174 aa).

The 136-residue stretch at 36–171 (PDTLWSKLNE…GIIHLMEEVY (136 aa)) folds into the FAS1 domain.

The sequence is that of Putative FAS1 domain-containing protein 096L from Acheta domesticus (House cricket).